The chain runs to 139 residues: Nucleoside diphosphate kinase (139 aa).

6 residues coordinate ATP: K10, F58, R86, T92, R104, and N114. H117 (pros-phosphohistidine intermediate) is an active-site residue.

This sequence belongs to the NDK family. As to quaternary structure, homotetramer. Requires Mg(2+) as cofactor.

The protein resides in the cytoplasm. The catalysed reaction is a 2'-deoxyribonucleoside 5'-diphosphate + ATP = a 2'-deoxyribonucleoside 5'-triphosphate + ADP. The enzyme catalyses a ribonucleoside 5'-diphosphate + ATP = a ribonucleoside 5'-triphosphate + ADP. Functionally, major role in the synthesis of nucleoside triphosphates other than ATP. The ATP gamma phosphate is transferred to the NDP beta phosphate via a ping-pong mechanism, using a phosphorylated active-site intermediate. The protein is Nucleoside diphosphate kinase of Mycolicibacterium smegmatis (strain ATCC 700084 / mc(2)155) (Mycobacterium smegmatis).